The primary structure comprises 105 residues: uncharacterized protein (105 aa).

The disordered stretch occupies residues threonine 80–aspartate 105.

This is an uncharacterized protein from Micromonospora rosea.